A 370-amino-acid chain; its full sequence is Prolactin-releasing peptide receptor (370 aa).

Topologically, residues 1-62 (MASSTTRGPR…LQLVHQLKGL (62 aa)) are extracellular. N-linked (GlcNAc...) asparagine glycans are attached at residues asparagine 27 and asparagine 36. The chain crosses the membrane as a helical span at residues 63–83 (IVLLYSVVVVVGLVGNCLLVL). Residues 84–101 (VIARVRRLHNVTNFLIGN) are Cytoplasmic-facing. A helical membrane pass occupies residues 102 to 122 (LALSDVLMCTACVPLTLAYAF). Topologically, residues 123 to 126 (EPRG) are extracellular. A helical transmembrane segment spans residues 127-147 (WVFGGGLCHLVFFLQPVTVYV). A disulfide bond links cysteine 134 and cysteine 211. Residues 148 to 175 (SVFTLTTIAVDRYVVLVHPLRRRISLRL) are Cytoplasmic-facing. The helical transmembrane segment at 176–196 (SAYAVLAIWALSAVLALPAAV) threads the bilayer. Residues 197–225 (HTYHVELKPHDVRLCEEFWGSQERQRQLY) are Extracellular-facing. The chain crosses the membrane as a helical span at residues 226 to 246 (AWGLLLVTYLLPLLVILLSYV). Over 247-276 (RVSVKLRNRVVPGCVTQSQADWDRARRRRT) the chain is Cytoplasmic. The chain crosses the membrane as a helical span at residues 277-297 (FCLLVVIVVVFAVCWLPLHVF). Topologically, residues 298 to 317 (NLLRDLDPHAIDPYAFGLVQ) are extracellular. The chain crosses the membrane as a helical span at residues 318-338 (LLCHWLAMSSACYNPFIYAWL). Residues 339–369 (HDSFREELRKLLVAWPRKIAPHGQNMTVSVV) are Cytoplasmic-facing. The interval 365 to 370 (TVSVVI) is required for interaction with GRIP1, GRIP2 and PICK1.

Belongs to the G-protein coupled receptor 1 family. Interacts through its C-terminal region with the PDZ domain-containing proteins GRIP1, GRIP2 and PICK1. Interacts with PDZ domains 4 and 5 of GRIP1 and with the PDZ domain of PICK1. As to expression, only detected in the pituitary gland and in all cell types of pituitary adenomas.

Its subcellular location is the cell membrane. Its function is as follows. Receptor for prolactin-releasing peptide (PrRP). Implicated in lactation, regulation of food intake and pain-signal processing. This Homo sapiens (Human) protein is Prolactin-releasing peptide receptor (PRLHR).